The primary structure comprises 70 residues: Protein SlyX homolog (70 aa).

It belongs to the SlyX family.

This Agrobacterium fabrum (strain C58 / ATCC 33970) (Agrobacterium tumefaciens (strain C58)) protein is Protein SlyX homolog.